A 151-amino-acid chain; its full sequence is Small ribosomal subunit protein uS19 (151 aa).

It belongs to the universal ribosomal protein uS19 family.

This Picea mariana (Black spruce) protein is Small ribosomal subunit protein uS19 (RPS15).